The primary structure comprises 644 residues: Kininogen-1 (644 aa).

The signal sequence occupies residues 1–18; that stretch reads MKLITILFLCSRLLLSLT. Pyrrolidone carboxylic acid; in mature form is present on Gln19. The 105-residue stretch at 28–132 folds into the Cystatin kininogen-type 1 domain; sequence CNDKDLFKAV…TQTCQITPAE (105 aa). Cystine bridges form between Cys28-Cys614, Cys83-Cys94, Cys107-Cys126, Cys142-Cys145, Cys206-Cys218, Cys229-Cys248, Cys264-Cys267, Cys328-Cys340, and Cys351-Cys370. N-linked (GlcNAc...) (complex) asparagine glycosylation is present at Asn48. The interval 120-153 is O-glycosylated at one site only; that stretch reads SVATQTCQITPAEGPVVTAQYDCLGCVHPISTQS. The Cystatin kininogen-type 2 domain maps to 151–254; that stretch reads TQSPDLEPIL…SQNCDIYPGK (104 aa). Asn169 carries N-linked (GlcNAc...) asparagine glycosylation. N-linked (GlcNAc...) (complex) asparagine glycosylation occurs at Asn205. In terms of domain architecture, Cystatin kininogen-type 3 spans 273 to 376; that stretch reads TNSPELEETL…TVNCQPLGMI (104 aa). Asn294 carries N-linked (GlcNAc...) (complex) asparagine glycosylation. Phosphoserine; by FAM20C is present on Ser332. Pro383 carries the post-translational modification 4-hydroxyproline; partial. Residues 387-555 are disordered; the sequence is PFRSSRIGEI…TPIPSLAKPG (169 aa). Thr401 carries O-linked (GalNAc...) threonine glycosylation. Basic and acidic residues predominate over residues 418–434; sequence DSGKEQGHTRRHDWGHE. Repeats lie at residues 420 to 449, 450 to 479, and 480 to 510; these read GKEQGHTRRHDWGHEKQRKHNLGHGHKHER, DQGHGHQRGHGLGHGHEQQHGLGHGHKFKL, and DDDLEHQGGHVLDHGHKHKHGHGHGKHKNKG. Over residues 435–446 the composition is skewed to basic residues; that stretch reads KQRKHNLGHGHK. A compositionally biased stretch (basic and acidic residues) spans 477 to 493; sequence FKLDDDLEHQGGHVLDH. Residues 494-518 are compositionally biased toward basic residues; the sequence is GHKHKHGHGHGKHKNKGKKNGKHNG. Polar residues predominate over residues 524-539; the sequence is LASSSEDSTTPSAQTQ. Residues Thr533, Thr542, Thr546, Thr557, and Thr571 are each glycosylated (O-linked (GalNAc...) threonine). The O-linked (GalNAc...) serine glycan is linked to Ser577. O-linked (GalNAc...) threonine glycosylation occurs at Thr628.

In terms of assembly, interacts (high molecular weight kininogen) (via amino acids 402-532) with triafestin-1 and triafestin-2, anticoagulant proteins from Triatoma infestans. Interacts (high molecular weight kininogen) (via amino acids 402-532) with short form salivary protein D7R1, an anticoagulant protein from Anopheles stephensi. Interacts (high molecular weight kininogen) (via amino acids 421-466 and 459-513) with haemaphysalin, an anticoagulant protein from Haemaphysalis longicornis. In terms of processing, bradykinin is inactivated by ACE, which removes the dipeptide Arg-Phe from its C-terminus. Bradykinin is released from kininogen by plasma kallikrein. Post-translationally, hydroxylation of Pro-383 occurs prior to the release of bradykinin. In terms of processing, phosphorylated by FAM20C in the extracellular medium. N- and O-glycosylated. O-glycosylated with core 1 or possibly core 8 glycans. Post-translationally, (Microbial infection) Bradykinin is generated upon proteolytic cleavage by S.pyogenes SpeB to produce hypotension during septic shock. In terms of tissue distribution, secreted in plasma. T-kinin is detected in malignant ovarian, colon and breast carcinomas, but not in benign tumors.

The protein resides in the secreted. It localises to the extracellular space. Kininogens are inhibitors of thiol proteases. HMW-kininogen plays an important role in blood coagulation by helping to position optimally prekallikrein and factor XI next to factor XII; HMW-kininogen inhibits the thrombin- and plasmin-induced aggregation of thrombocytes. LMW-kininogen inhibits the aggregation of thrombocytes. LMW-kininogen is in contrast to HMW-kininogen not involved in blood clotting. Its function is as follows. The active peptide bradykinin is a potent vasodilatator that is released from HMW-kininogen shows a variety of physiological effects: (A) influence in smooth muscle contraction, (B) induction of hypotension, (C) natriuresis and diuresis, (D) decrease in blood glucose level, (E) it is a mediator of inflammation and causes (E1) increase in vascular permeability, (E2) stimulation of nociceptors (4E3) release of other mediators of inflammation (e.g. prostaglandins), (F) it has a cardioprotective effect (directly via bradykinin action, indirectly via endothelium-derived relaxing factor action). This Homo sapiens (Human) protein is Kininogen-1 (KNG1).